We begin with the raw amino-acid sequence, 344 residues long: G-protein coupled receptor str-217 (344 aa).

At Met1–Arg10 the chain is on the extracellular side. Residues Val11–Ser31 traverse the membrane as a helical segment. At Pro32 to Lys39 the chain is on the cytoplasmic side. Residues Tyr40–Glu60 traverse the membrane as a helical segment. Over Thr61–Asp88 the chain is Extracellular. A helical membrane pass occupies residues Ile89 to Ala109. At Tyr110–Lys128 the chain is on the cytoplasmic side. The chain crosses the membrane as a helical span at residues Ile129–Gly149. The Extracellular segment spans residues Pro150 to Ala195. N-linked (GlcNAc...) asparagine glycosylation is present at Asn170. Residues Ile196–Phe216 form a helical membrane-spanning segment. Over Gly217–Pro256 the chain is Cytoplasmic. A helical membrane pass occupies residues Leu257–Phe277. Topologically, residues Asn278–Pro279 are extracellular. The chain crosses the membrane as a helical span at residues Phe280 to Ile300. The Cytoplasmic segment spans residues Val301–Met344.

It belongs to the nematode receptor-like protein str family. As to expression, expressed in the ADL chemosensory neurons.

The protein localises to the cell membrane. In terms of biological role, probable G-protein coupled receptor. This chain is G-protein coupled receptor str-217, found in Caenorhabditis elegans.